A 79-amino-acid polypeptide reads, in one-letter code: Putative membrane protein insertion efficiency factor (79 aa).

This sequence belongs to the UPF0161 family.

Its subcellular location is the cell inner membrane. In terms of biological role, could be involved in insertion of integral membrane proteins into the membrane. The protein is Putative membrane protein insertion efficiency factor of Prochlorococcus marinus (strain NATL2A).